The primary structure comprises 196 residues: UPF0056 membrane protein BU449 (196 aa).

The next 6 membrane-spanning stretches (helical) occupy residues 8 to 28 (TILL…MTIL), 45 to 65 (IIAL…LIIL), 71 to 91 (TVSI…IFPS), 105 to 125 (FLVP…TLML), 134 to 154 (MFYL…ILLS), and 174 to 194 (MGLV…RAWF).

It belongs to the UPF0056 (MarC) family.

Its subcellular location is the cell membrane. The sequence is that of UPF0056 membrane protein BU449 from Buchnera aphidicola subsp. Acyrthosiphon pisum (strain APS) (Acyrthosiphon pisum symbiotic bacterium).